The following is a 159-amino-acid chain: Ribosomal RNA large subunit methyltransferase H (159 aa).

S-adenosyl-L-methionine is bound by residues Leu76, Gly108, and 127-132 (FGQLTL).

The protein belongs to the RNA methyltransferase RlmH family. As to quaternary structure, homodimer.

The protein localises to the cytoplasm. It carries out the reaction pseudouridine(1915) in 23S rRNA + S-adenosyl-L-methionine = N(3)-methylpseudouridine(1915) in 23S rRNA + S-adenosyl-L-homocysteine + H(+). Functionally, specifically methylates the pseudouridine at position 1915 (m3Psi1915) in 23S rRNA. In Streptococcus gordonii (strain Challis / ATCC 35105 / BCRC 15272 / CH1 / DL1 / V288), this protein is Ribosomal RNA large subunit methyltransferase H.